We begin with the raw amino-acid sequence, 249 residues long: MNMSQSQKIVLQPRSIVVPGELLAEGEFQIPWSPYILKINSKYYSTVVGLFDVKDTQFEVIPLEGSFYYPKINDIVIGLVEDVEIYGWVVDIKAPYKAYLPASNLLGRSINVGEDLRRYLDVGDYVIARIENFDRSIDPVLSVKGKDLGRVSNGIVIDIMPVKVPRVIGKNKSMYETLTSKSGCSIFVANNGRIWATCPSRFSEEILIEAIRKIENESHIKGLTDRIKQFIEEKLGERNASSGETKTNS.

The S1 motif domain occupies 73–144 (NDIVIGLVED…RSIDPVLSVK (72 aa)). Residues 154–211 (GIVIDIMPVKVPRVIGKNKSMYETLTSKSGCSIFVANNGRIWATCPSRFSEEILIEAI) enclose the KH domain.

This sequence belongs to the RRP4 family. As to quaternary structure, component of the archaeal exosome complex. Forms a trimer of Rrp4 and/or Csl4 subunits. The trimer associates with a hexameric ring-like arrangement composed of 3 Rrp41-Rrp42 heterodimers.

It is found in the cytoplasm. Its function is as follows. Non-catalytic component of the exosome, which is a complex involved in RNA degradation. Increases the RNA binding and the efficiency of RNA degradation. Confers strong poly(A) specificity to the exosome. The sequence is that of Exosome complex component Rrp4 from Saccharolobus solfataricus (strain ATCC 35092 / DSM 1617 / JCM 11322 / P2) (Sulfolobus solfataricus).